We begin with the raw amino-acid sequence, 236 residues long: DNA repair protein RecO (236 aa).

Belongs to the RecO family.

Involved in DNA repair and RecF pathway recombination. This Photobacterium profundum (strain SS9) protein is DNA repair protein RecO.